The primary structure comprises 245 residues: tRNA (guanine-N(1)-)-methyltransferase (245 aa).

S-adenosyl-L-methionine contacts are provided by residues glycine 114 and 134-139 (IGDYIL).

It belongs to the RNA methyltransferase TrmD family. As to quaternary structure, homodimer.

It is found in the cytoplasm. The enzyme catalyses guanosine(37) in tRNA + S-adenosyl-L-methionine = N(1)-methylguanosine(37) in tRNA + S-adenosyl-L-homocysteine + H(+). Specifically methylates guanosine-37 in various tRNAs. The sequence is that of tRNA (guanine-N(1)-)-methyltransferase from Listeria welshimeri serovar 6b (strain ATCC 35897 / DSM 20650 / CCUG 15529 / CIP 8149 / NCTC 11857 / SLCC 5334 / V8).